Reading from the N-terminus, the 579-residue chain is Protein LYRIC (579 aa).

Topologically, residues 1–48 (MAARSWQDELAQQAEEGSARLRELLSVGLGFLRTELGLDLGLEPKRYP) are lumenal. The tract at residues 1 to 71 (MAARSWQDEL…LLLFLLGYGW (71 aa)) is activation of NF-kappa-B. A helical transmembrane segment spans residues 49-69 (GWVILVGTGALGLLLLFLLGY). Residues 70–579 (GWAAACAGAR…KKKKKARRET (510 aa)) lie on the Cytoplasmic side of the membrane. Residues 72 to 168 (AAACAGARKK…EKSKKNKKKS (97 aa)) are interaction with BCCIP. Residues 78-222 (ARKKRRSPPR…SGSLDSTIPG (145 aa)) are disordered. An interaction with RELA region spans residues 100-204 (DDLAQLKNLR…ISHREKRQQR (105 aa)). A compositionally biased stretch (basic and acidic residues) spans 108 to 126 (LRSEEQKKKNRKKLPEKPK). Residues 159–168 (EKSKKNKKKS) are compositionally biased toward basic residues. Residue Ser179 is modified to Phosphoserine. The segment covering 197-207 (HREKRQQRKRD) has biased composition (basic residues). 2 positions are modified to phosphoserine: Ser215 and Ser250. At Lys263 the chain carries N6-acetyllysine. Residues 277–579 (NLTVNGGGWS…KKKKKARRET (303 aa)) form a disordered region. Phosphoserine occurs at positions 297, 303, and 308. A compositionally biased stretch (polar residues) spans 317-329 (SAWTQDTGDTNAN). 2 positions are modified to phosphoserine: Ser341 and Ser366. Polar residues-rich tracts occupy residues 351–369 (EPVSQSTTSDYQWDVSRNQ), 380–391 (NGLSSADPSSDW), and 410–420 (LKSQEPISNDQ). Positions 378-440 (GLNGLSSADP…EGALPTGKSK (63 aa)) are lung-homing for mammary tumors. 2 positions are modified to phosphoserine: Ser412 and Ser423. Residues 421-431 (KVSDDDKEKGE) show a composition bias toward basic and acidic residues. The span at 438–448 (KSKKKKKKKKK) shows a compositional bias: basic residues. Residues 449–470 (QGEDNSHTQDTEDLEKDTREEL) are compositionally biased toward basic and acidic residues. Ser454, Ser475, Ser491, and Ser493 each carry phosphoserine. Composition is skewed to polar residues over residues 517–533 (PSITLSKGDSDNSSSQV) and 546–565 (NAKQNSVPPSQTKSETNWES). The residue at position 565 (Ser565) is a Phosphoserine. A compositionally biased stretch (basic residues) spans 568–579 (QIKKKKKARRET).

Interacts with BCCIP, CREBBP/CBP and RELA/p65. In the mammary gland, expressed at the apical surface of epithelial cells lining ducts, as well as in the mammary fat pad. Not detected in the spleen, kidney, lung, or skin; minute amounts seen in the liver. Expressed in Purkinje neurons in the early postnatal and adult cerebellum. Overexpressed in mammary tumors (at protein level).

The protein resides in the endoplasmic reticulum membrane. It is found in the nucleus membrane. Its subcellular location is the cell junction. The protein localises to the tight junction. It localises to the nucleus. The protein resides in the nucleolus. It is found in the cytoplasm. Its subcellular location is the perinuclear region. In terms of biological role, down-regulates SLC1A2/EAAT2 promoter activity when expressed ectopically. Activates the nuclear factor kappa-B (NF-kappa-B) transcription factor. Promotes anchorage-independent growth of immortalized melanocytes and astrocytes which is a key component in tumor cell expansion. Promotes lung metastasis and also has an effect on bone and brain metastasis, possibly by enhancing the seeding of tumor cells to the target organ endothelium. Induces chemoresistance. This chain is Protein LYRIC (Mtdh), found in Mus musculus (Mouse).